Reading from the N-terminus, the 202-residue chain is NADH dehydrogenase [ubiquinone] iron-sulfur protein 7, mitochondrial (202 aa).

A mitochondrion-targeting transit peptide spans 1–56 (MLRRTSFNFTGRAMISRGSPEWSHRLDLKKGKKTTMMHKLGTSKPNNALQYAQMTL). Residues C77, C78, C142, and C172 each coordinate [4Fe-4S] cluster.

This sequence belongs to the complex I 20 kDa subunit family. Complex I is composed of 45 different subunits This is a component of the iron-sulfur (IP) fragment of the enzyme. It depends on [4Fe-4S] cluster as a cofactor.

The protein localises to the mitochondrion. The catalysed reaction is a ubiquinone + NADH + 5 H(+)(in) = a ubiquinol + NAD(+) + 4 H(+)(out). Core subunit of the mitochondrial membrane respiratory chain NADH dehydrogenase (Complex I) that is believed to belong to the minimal assembly required for catalysis. Complex I functions in the transfer of electrons from NADH to the respiratory chain. The immediate electron acceptor for the enzyme is believed to be ubiquinone. The polypeptide is NADH dehydrogenase [ubiquinone] iron-sulfur protein 7, mitochondrial (NDHK) (Trypanosoma brucei brucei).